We begin with the raw amino-acid sequence, 153 residues long: ATP synthase subunit b' (153 aa).

A helical transmembrane segment spans residues 20–40 (TLPLMAVQVVLLTFILNALFF).

It belongs to the ATPase B chain family. F-type ATPases have 2 components, F(1) - the catalytic core - and F(0) - the membrane proton channel. F(1) has five subunits: alpha(3), beta(3), gamma(1), delta(1), epsilon(1). F(0) has four main subunits: a(1), b(1), b'(1) and c(10-14). The alpha and beta chains form an alternating ring which encloses part of the gamma chain. F(1) is attached to F(0) by a central stalk formed by the gamma and epsilon chains, while a peripheral stalk is formed by the delta, b and b' chains.

The protein localises to the cellular thylakoid membrane. In terms of biological role, f(1)F(0) ATP synthase produces ATP from ADP in the presence of a proton or sodium gradient. F-type ATPases consist of two structural domains, F(1) containing the extramembraneous catalytic core and F(0) containing the membrane proton channel, linked together by a central stalk and a peripheral stalk. During catalysis, ATP synthesis in the catalytic domain of F(1) is coupled via a rotary mechanism of the central stalk subunits to proton translocation. Its function is as follows. Component of the F(0) channel, it forms part of the peripheral stalk, linking F(1) to F(0). The b'-subunit is a diverged and duplicated form of b found in plants and photosynthetic bacteria. This chain is ATP synthase subunit b', found in Prochlorococcus marinus (strain NATL2A).